The primary structure comprises 255 residues: Octanoyltransferase (255 aa).

Residues 1-21 form a disordered region; that stretch reads MCATPVSPSPESPRSAQAGAA. One can recognise a BPL/LPL catalytic domain in the interval 56–242; it reads FETSDEIWLV…SLIANIDGIP (187 aa). Substrate contacts are provided by residues 96 to 103, 173 to 175, and 186 to 188; these read RGGQITYH, ALG, and GVS. Catalysis depends on Cys-204, which acts as the Acyl-thioester intermediate.

The protein belongs to the LipB family.

Its subcellular location is the cytoplasm. It catalyses the reaction octanoyl-[ACP] + L-lysyl-[protein] = N(6)-octanoyl-L-lysyl-[protein] + holo-[ACP] + H(+). Its pathway is protein modification; protein lipoylation via endogenous pathway; protein N(6)-(lipoyl)lysine from octanoyl-[acyl-carrier-protein]: step 1/2. In terms of biological role, catalyzes the transfer of endogenously produced octanoic acid from octanoyl-acyl-carrier-protein onto the lipoyl domains of lipoate-dependent enzymes. Lipoyl-ACP can also act as a substrate although octanoyl-ACP is likely to be the physiological substrate. The chain is Octanoyltransferase from Paraburkholderia phymatum (strain DSM 17167 / CIP 108236 / LMG 21445 / STM815) (Burkholderia phymatum).